Consider the following 625-residue polypeptide: Phosphomethylpyrimidine synthase (625 aa).

Substrate-binding positions include Asn230, Met259, Tyr288, His324, 344–346 (SRG), 385–388 (DGLR), and Glu424. Position 428 (His428) interacts with Zn(2+). Tyr451 serves as a coordination point for substrate. His492 contributes to the Zn(2+) binding site. [4Fe-4S] cluster-binding residues include Cys572, Cys575, and Cys580.

Belongs to the ThiC family. Homodimer. It depends on [4Fe-4S] cluster as a cofactor.

The catalysed reaction is 5-amino-1-(5-phospho-beta-D-ribosyl)imidazole + S-adenosyl-L-methionine = 4-amino-2-methyl-5-(phosphooxymethyl)pyrimidine + CO + 5'-deoxyadenosine + formate + L-methionine + 3 H(+). Its pathway is cofactor biosynthesis; thiamine diphosphate biosynthesis. Functionally, catalyzes the synthesis of the hydroxymethylpyrimidine phosphate (HMP-P) moiety of thiamine from aminoimidazole ribotide (AIR) in a radical S-adenosyl-L-methionine (SAM)-dependent reaction. This chain is Phosphomethylpyrimidine synthase, found in Xanthomonas campestris pv. campestris (strain 8004).